The primary structure comprises 370 residues: Flagellar P-ring protein (370 aa).

Positions 1–21 are cleaved as a signal peptide; sequence MKLLLFILMISSIIIVPVGQA.

The protein belongs to the FlgI family. As to quaternary structure, the basal body constitutes a major portion of the flagellar organelle and consists of four rings (L,P,S, and M) mounted on a central rod.

Its subcellular location is the periplasm. The protein localises to the bacterial flagellum basal body. In terms of biological role, assembles around the rod to form the L-ring and probably protects the motor/basal body from shearing forces during rotation. This chain is Flagellar P-ring protein, found in Pseudoalteromonas atlantica (strain T6c / ATCC BAA-1087).